Here is a 239-residue protein sequence, read N- to C-terminus: 1-(5-phosphoribosyl)-5-[(5-phosphoribosylamino)methylideneamino] imidazole-4-carboxamide isomerase (239 aa).

Catalysis depends on Asp8, which acts as the Proton acceptor. Asp129 functions as the Proton donor in the catalytic mechanism.

This sequence belongs to the HisA/HisF family.

It localises to the cytoplasm. It catalyses the reaction 1-(5-phospho-beta-D-ribosyl)-5-[(5-phospho-beta-D-ribosylamino)methylideneamino]imidazole-4-carboxamide = 5-[(5-phospho-1-deoxy-D-ribulos-1-ylimino)methylamino]-1-(5-phospho-beta-D-ribosyl)imidazole-4-carboxamide. Its pathway is amino-acid biosynthesis; L-histidine biosynthesis; L-histidine from 5-phospho-alpha-D-ribose 1-diphosphate: step 4/9. In Pelagibacter ubique (strain HTCC1062), this protein is 1-(5-phosphoribosyl)-5-[(5-phosphoribosylamino)methylideneamino] imidazole-4-carboxamide isomerase.